A 345-amino-acid polypeptide reads, in one-letter code: Protein RecA (345 aa).

An ATP-binding site is contributed by 66 to 73 (GPESSGKT).

The protein belongs to the RecA family.

It localises to the cytoplasm. Functionally, can catalyze the hydrolysis of ATP in the presence of single-stranded DNA, the ATP-dependent uptake of single-stranded DNA by duplex DNA, and the ATP-dependent hybridization of homologous single-stranded DNAs. It interacts with LexA causing its activation and leading to its autocatalytic cleavage. This is Protein RecA from Acidithiobacillus ferrooxidans (strain ATCC 23270 / DSM 14882 / CIP 104768 / NCIMB 8455) (Ferrobacillus ferrooxidans (strain ATCC 23270)).